Here is a 513-residue protein sequence, read N- to C-terminus: ATP synthase subunit alpha (513 aa).

169–176 (GDRQTGKT) contributes to the ATP binding site.

Belongs to the ATPase alpha/beta chains family. F-type ATPases have 2 components, CF(1) - the catalytic core - and CF(0) - the membrane proton channel. CF(1) has five subunits: alpha(3), beta(3), gamma(1), delta(1), epsilon(1). CF(0) has three main subunits: a(1), b(2) and c(9-12). The alpha and beta chains form an alternating ring which encloses part of the gamma chain. CF(1) is attached to CF(0) by a central stalk formed by the gamma and epsilon chains, while a peripheral stalk is formed by the delta and b chains.

It localises to the cell inner membrane. The catalysed reaction is ATP + H2O + 4 H(+)(in) = ADP + phosphate + 5 H(+)(out). Functionally, produces ATP from ADP in the presence of a proton gradient across the membrane. The alpha chain is a regulatory subunit. This chain is ATP synthase subunit alpha, found in Methylobacillus flagellatus (strain ATCC 51484 / DSM 6875 / VKM B-1610 / KT).